Here is a 160-residue protein sequence, read N- to C-terminus: Small ribosomal subunit protein uS7 (160 aa).

Belongs to the universal ribosomal protein uS7 family. As to quaternary structure, part of the 30S ribosomal subunit. Contacts proteins S9 and S11.

One of the primary rRNA binding proteins, it binds directly to 16S rRNA where it nucleates assembly of the head domain of the 30S subunit. Is located at the subunit interface close to the decoding center, probably blocks exit of the E-site tRNA. The polypeptide is Small ribosomal subunit protein uS7 (Hydrogenobaculum sp. (strain Y04AAS1)).